We begin with the raw amino-acid sequence, 465 residues long: Mothers against decapentaplegic homolog 1 (465 aa).

An N-acetylmethionine modification is found at methionine 1. The region spanning 12 to 136 (PAVKRLLGWK…YKRVESPVLP (125 aa)) is the MH1 domain. Zn(2+) contacts are provided by cysteine 64, cysteine 109, cysteine 121, and histidine 126. The tract at residues 162 to 249 (NEPHMPLNAT…QPMDTNMMAP (88 aa)) is disordered. The segment covering 179–210 (PNSHPFPHSPNSSYPNSPGSSSSTYPHSPTSS) has biased composition (low complexity). Over residues 221–232 (DTPPPAYLPPED) the composition is skewed to pro residues. Residues 271–465 (WCSIVYYELN…SPHNPISSVS (195 aa)) form the MH2 domain. At threonine 322 the chain carries Phosphothreonine; by MINK1, TNIK and MAP4K4. Residues 418–428 (KGWGAEYHRQD) are L3 loop. Serine 463 and serine 465 each carry phosphoserine.

Belongs to the dwarfin/SMAD family. In terms of assembly, found in a complex with SMAD4 and YY1. Interacts with HGS, NANOG and ZCCHC12. Upon C-terminus phosphorylation: forms trimers with another SMAD1 and the co-SMAD SMAD4. Interacts with PEBP2-alpha subunit, CREB-binding protein (CBP), p300, SMURF1, SMURF2, USP15 and HOXC8. Associates with ZNF423 or ZNF521 in response to BMP2 leading to activate transcription of BMP target genes. Interacts with SKOR1. Interacts (via MH2 domain) with LEMD3. Binding to LEMD3 results in at least a partial reduction of receptor-mediated phosphorylation. Forms a ternary complex with PSMB4 and OAZ1 before PSMB4 is incorporated into the 20S proteasome. Interacts (via MH2 domain) with FAM83G (via MH2 domain); in a SMAD4-independent manner. Interacts with ZC3H3. Interacts with TMEM119. Interacts (via MH1 and MH2 domains) with ZNF8. Interacts with RANBP3L; the interaction increases when SMAD1 is not phosphorylated and mediates SMAD1 nuclear export. Interacts with EGR1; this interaction inhibits SMAD1 dephosphorylation. Interacts with SMAD6. Interacts with YAP1. Interacts with MTMR4; negatively regulates BMP signaling through SMAD1 dephosphorylation and retention in endosomes. In terms of processing, phosphorylation of the C-terminal SVS motif by BMP type 1 receptor kinase activates SMAD1 by promoting dissociation from the receptor and trimerization with SMAD4. Phosphorylation by ERK2 MAP kinase in response to EGF or HGF prevents SMAD1 nuclear accumulation and transcriptional activity in response to BMP. Dephosphorylation, probably by PPM1A, induces its export from the nucleus to the cytoplasm. Dephosphorylation is inhibited by association with EGR1. Phosphorylation by CDK8/9 creates binding sites for YAP1, and subsequent phosphorylation by GSK3 switches off YAP1 binding and adds binding sites for SMURF1. Post-translationally, ubiquitinated by SMAD-specific E3 ubiquitin ligase SMURF1, leading to its degradation. Monoubiquitinated, leading to prevent DNA-binding. Deubiquitination by USP15 alleviates inhibition and promotes activation of TGF-beta target genes. Dephosphorylation, probably by PPM1A, induces its export from the nucleus to the cytoplasm. Phospho-SMAD1 is ubiquitinated by CHIP leading to disruption of the SMAD1-SMAD4 complex.

The protein resides in the cytoplasm. The protein localises to the nucleus. In terms of biological role, transcriptional modulator that plays a role in various cellular processes, including embryonic development, cell differentiation, and tissue homeostasis. Upon BMP ligand binding to their receptors at the cell surface, is phosphorylated by activated type I BMP receptors (BMPRIs) and associates with SMAD4 to form an heteromeric complex which translocates into the nucleus acting as transcription factor. In turn, the hetero-trimeric complex recognizes cis-regulatory elements containing Smad Binding Elements (SBEs) to modulate the outcome of the signaling network. SMAD1/OAZ1/PSMB4 complex mediates the degradation of the CREBBP/EP300 repressor SNIP1. Positively regulates BMP4-induced expression of odontogenic development regulator MSX1 following IPO7-mediated nuclear import. The polypeptide is Mothers against decapentaplegic homolog 1 (SMAD1) (Bos taurus (Bovine)).